A 314-amino-acid chain; its full sequence is Secreted frizzled-related protein 1 (314 aa).

Positions 1-31 (MGVGRSARGRGGAASGVLLALAAALLAAGSA) are cleaved as a signal peptide. Residues 53 to 169 (TKPPQCVDIP…FPEGDVCIAM (117 aa)) enclose the FZ domain. Disulfide bonds link Cys-58-Cys-121, Cys-68-Cys-114, Cys-105-Cys-140, Cys-129-Cys-166, and Cys-133-Cys-157. Asn-173 carries an N-linked (GlcNAc...) asparagine glycan. Cystine bridges form between Cys-186–Cys-256, Cys-189–Cys-258, and Cys-203–Cys-306. The NTR domain occupies 186–306 (CPPCDNELKS…FMKRMKNHEC (121 aa)).

The protein belongs to the secreted frizzled-related protein (sFRP) family. Interacts with WNT8, WNT1, WNT2, WNT4 and FRZD6. Interacts with MYOC. Highly expressed in kidney and embryonic heart. Also highly expressed in the eye, where it is principally localized to the ciliary body and the lens epithelium. Weaker expression in heart, lung and brain. In the brain, is expressed exclusively in the choroid plexus.

The protein resides in the secreted. In terms of biological role, soluble frizzled-related proteins (sFRPS) function as modulators of Wnt signaling through direct interaction with Wnts. They have a role in regulating cell growth and differentiation in specific cell types. SFRP1 decreases intracellular beta-catenin levels. Has antiproliferative effects on vascular cells, in vitro and in vivo, and can induce, in vivo, an angiogenic response. In vascular cell cycle, delays the G1 phase and entry into the S phase. In kidney development, inhibits tubule formation and bud growth in metanephroi. Inhibits WNT1/WNT4-mediated TCF-dependent transcription. This Mus musculus (Mouse) protein is Secreted frizzled-related protein 1.